The following is a 310-amino-acid chain: Vomeronasal type-1 receptor 90 (310 aa).

The Extracellular portion of the chain corresponds to 1–20 (MRRISTLYGVVDKQAIFFSE). A helical membrane pass occupies residues 21–41 (VVIGISFNSILFLFHIFQFLL). Topologically, residues 42-46 (ERRLR) are cytoplasmic. Residues 47-67 (ITDLIISLLALIHLGMLTVMG) traverse the membrane as a helical segment. Topologically, residues 68–93 (FRAVDIFASQNVWNDIKCKSLAHLHR) are extracellular. Cysteines 85 and 172 form a disulfide. A helical transmembrane segment spans residues 94–114 (LLRGLSLCATCLLSIFQAITL). Residues 115-135 (SPRSSCLAKFKYKSTQHSLCS) lie on the Cytoplasmic side of the membrane. The chain crosses the membrane as a helical span at residues 136–156 (LLVLWAFYMSCGTHYSFTIVA). Residues 157–183 (DYNFSSRSLIFVTESCIILPMDYITRH) are Extracellular-facing. N-linked (GlcNAc...) asparagine glycosylation occurs at N159. The chain crosses the membrane as a helical span at residues 184–204 (LFFILGIFRDVSFIGLMALSS). Over 205–238 (GYMVALLCRHRKQAQHLHRTSLSPKASPEQRATR) the chain is Cytoplasmic. Residues 239–259 (TILLLMSFFVLMYCLDCTISA) traverse the membrane as a helical segment. The Extracellular portion of the chain corresponds to 260–271 (SRLMHNGEPIHH). The helical transmembrane segment at 272–292 (SIQMMVSNSYATLSPLLLIVT) threads the bilayer. Residues 293–310 (ENRISRFLKSLLGRTVDA) lie on the Cytoplasmic side of the membrane.

This sequence belongs to the G-protein coupled receptor 1 family. Expressed in 1-4% of neurons of the vomeronasal organ. Only one pheromone receptor gene may be expressed in a particular neuron. Not expressed in the main olfactory epithelium.

It is found in the cell membrane. Functionally, putative pheromone receptor implicated in the regulation of social as well as reproductive behavior. This chain is Vomeronasal type-1 receptor 90 (Vom1r90), found in Rattus norvegicus (Rat).